Reading from the N-terminus, the 179-residue chain is Cytochrome b6-f complex iron-sulfur subunit (179 aa).

Residues Leu21–Ile43 form a helical membrane-spanning segment. Residues Gly61–Leu162 enclose the Rieske domain. Positions 108, 110, 126, and 129 each coordinate [2Fe-2S] cluster. The cysteines at positions 113 and 128 are disulfide-linked.

It belongs to the Rieske iron-sulfur protein family. As to quaternary structure, the 4 large subunits of the cytochrome b6-f complex are cytochrome b6, subunit IV (17 kDa polypeptide, PetD), cytochrome f and the Rieske protein, while the 4 small subunits are PetG, PetL, PetM and PetN. The complex functions as a dimer. Requires [2Fe-2S] cluster as cofactor.

The protein resides in the cellular thylakoid membrane. The enzyme catalyses 2 oxidized [plastocyanin] + a plastoquinol + 2 H(+)(in) = 2 reduced [plastocyanin] + a plastoquinone + 4 H(+)(out). In terms of biological role, component of the cytochrome b6-f complex, which mediates electron transfer between photosystem II (PSII) and photosystem I (PSI), cyclic electron flow around PSI, and state transitions. The protein is Cytochrome b6-f complex iron-sulfur subunit of Desmonostoc sp. (strain PCC 7906) (Nostoc sp. (strain PCC 7906)).